A 473-amino-acid polypeptide reads, in one-letter code: ATP synthase subunit beta (473 aa).

158-165 is an ATP binding site; that stretch reads GGAGVGKT.

The protein belongs to the ATPase alpha/beta chains family. F-type ATPases have 2 components, CF(1) - the catalytic core - and CF(0) - the membrane proton channel. CF(1) has five subunits: alpha(3), beta(3), gamma(1), delta(1), epsilon(1). CF(0) has three main subunits: a(1), b(2) and c(9-12). The alpha and beta chains form an alternating ring which encloses part of the gamma chain. CF(1) is attached to CF(0) by a central stalk formed by the gamma and epsilon chains, while a peripheral stalk is formed by the delta and b chains.

The protein localises to the cell membrane. It catalyses the reaction ATP + H2O + 4 H(+)(in) = ADP + phosphate + 5 H(+)(out). In terms of biological role, produces ATP from ADP in the presence of a proton gradient across the membrane. The catalytic sites are hosted primarily by the beta subunits. This chain is ATP synthase subunit beta, found in Bacillus pumilus (strain SAFR-032).